Here is a 105-residue protein sequence, read N- to C-terminus: Large ribosomal subunit protein eL36 (105 aa).

This sequence belongs to the eukaryotic ribosomal protein eL36 family. As to quaternary structure, component of the large ribosomal subunit.

It localises to the cytoplasm. The protein resides in the cytosol. Functionally, component of the large ribosomal subunit. The ribosome is a large ribonucleoprotein complex responsible for the synthesis of proteins in the cell. The chain is Large ribosomal subunit protein eL36 (rpl36) from Xenopus laevis (African clawed frog).